A 148-amino-acid polypeptide reads, in one-letter code: SsrA-binding protein (148 aa).

Positions K123–T148 are disordered. Residues D126 to R142 are compositionally biased toward basic and acidic residues.

Belongs to the SmpB family.

It is found in the cytoplasm. Functionally, required for rescue of stalled ribosomes mediated by trans-translation. Binds to transfer-messenger RNA (tmRNA), required for stable association of tmRNA with ribosomes. tmRNA and SmpB together mimic tRNA shape, replacing the anticodon stem-loop with SmpB. tmRNA is encoded by the ssrA gene; the 2 termini fold to resemble tRNA(Ala) and it encodes a 'tag peptide', a short internal open reading frame. During trans-translation Ala-aminoacylated tmRNA acts like a tRNA, entering the A-site of stalled ribosomes, displacing the stalled mRNA. The ribosome then switches to translate the ORF on the tmRNA; the nascent peptide is terminated with the 'tag peptide' encoded by the tmRNA and targeted for degradation. The ribosome is freed to recommence translation, which seems to be the essential function of trans-translation. This chain is SsrA-binding protein, found in Burkholderia pseudomallei (strain 1710b).